The primary structure comprises 384 residues: Probable beta-1,3-galactosyltransferase 1 (384 aa).

The chain crosses the membrane as a helical; Signal-anchor for type II membrane protein span at residues 21–43; sequence SVFFMCLASFCLGMFFTNRMWNI. N-linked (GlcNAc...) asparagine glycosylation is found at Asn73 and Asn105.

The protein belongs to the glycosyltransferase 31 family. The cofactor is Mn(2+).

Its subcellular location is the golgi apparatus membrane. It functions in the pathway protein modification; protein glycosylation. In terms of biological role, beta-1,3-galactosyltransferase that transfers galactose from UDP-galactose to substrates with a terminal glycosyl residue. This chain is Probable beta-1,3-galactosyltransferase 1 (B3GALT1), found in Arabidopsis thaliana (Mouse-ear cress).